The sequence spans 41 residues: MQDVKTYLSTAPVLATLWFGFLAGLLIEINRFFPDALVLPL.

Residues 7–27 (YLSTAPVLATLWFGFLAGLLI) form a helical membrane-spanning segment.

Belongs to the PsaJ family.

The protein localises to the plastid. It localises to the chloroplast thylakoid membrane. Functionally, may help in the organization of the PsaE and PsaF subunits. This is Photosystem I reaction center subunit IX from Physcomitrium patens (Spreading-leaved earth moss).